Here is a 558-residue protein sequence, read N- to C-terminus: Potassium-transporting ATPase potassium-binding subunit (558 aa).

The next 12 helical transmembrane spans lie at 2-22, 66-86, 135-155, 177-197, 253-273, 280-300, 327-347, 354-374, 378-398, 413-433, 482-502, and 528-548; these read LQGFVQIALILAILVATAPLL, VSAALISNLVMGVFVFLILMF, ALGFLMFTSAATGIAVAIAFI, ILLPISLVGAILLLVAGVPET, LLETVIMMVIPAGLIITYGIM, GWLIFWMVFILYGILIAIAAV, FGWVLTALWAVSTTGTMCGAV, LMPPGGFVTLSDLFLQIIWGG, GTAYLFVFLILTVFLTGLMVG, IVLASLILLIHPIAILIPTAI, LSASFSLIAGRYVPIVALIFL, and GITAGAIIILGALTFLPILVL.

Belongs to the KdpA family. The system is composed of three essential subunits: KdpA, KdpB and KdpC.

Its subcellular location is the cell inner membrane. Its function is as follows. Part of the high-affinity ATP-driven potassium transport (or Kdp) system, which catalyzes the hydrolysis of ATP coupled with the electrogenic transport of potassium into the cytoplasm. This subunit binds the periplasmic potassium ions and delivers the ions to the membrane domain of KdpB through an intramembrane tunnel. The chain is Potassium-transporting ATPase potassium-binding subunit from Synechocystis sp. (strain ATCC 27184 / PCC 6803 / Kazusa).